The primary structure comprises 804 residues: Leucine--tRNA ligase (804 aa).

Positions Pro-39 to His-50 match the 'HIGH' region motif. The 'KMSKS' region motif lies at Lys-573–Ser-577. Lys-576 lines the ATP pocket.

It belongs to the class-I aminoacyl-tRNA synthetase family.

It localises to the cytoplasm. It carries out the reaction tRNA(Leu) + L-leucine + ATP = L-leucyl-tRNA(Leu) + AMP + diphosphate. The sequence is that of Leucine--tRNA ligase from Lactobacillus acidophilus (strain ATCC 700396 / NCK56 / N2 / NCFM).